Consider the following 216-residue polypeptide: V-type ATP synthase subunit D (216 aa).

It belongs to the V-ATPase D subunit family.

Produces ATP from ADP in the presence of a proton gradient across the membrane. The protein is V-type ATP synthase subunit D of Clostridium novyi (strain NT).